Here is a 215-residue protein sequence, read N- to C-terminus: L-fuculose phosphate aldolase (215 aa).

Substrate-binding positions include 28-29 (GN), 43-44 (TG), and 71-72 (SS). Glutamate 73 acts as the Proton donor/acceptor in catalysis. Positions 73, 92, 94, and 155 each coordinate Zn(2+).

This sequence belongs to the aldolase class II family. AraD/FucA subfamily. Homotetramer. Requires Zn(2+) as cofactor.

The catalysed reaction is L-fuculose 1-phosphate = (S)-lactaldehyde + dihydroxyacetone phosphate. It functions in the pathway carbohydrate degradation; L-fucose degradation; L-lactaldehyde and glycerone phosphate from L-fucose: step 3/3. Its function is as follows. Involved in the degradation of L-fucose and D-arabinose. Catalyzes the reversible cleavage of L-fuculose 1-phosphate (Fuc1P) to yield dihydroxyacetone phosphate (DHAP) and L-lactaldehyde. In Escherichia coli O6:H1 (strain CFT073 / ATCC 700928 / UPEC), this protein is L-fuculose phosphate aldolase.